Reading from the N-terminus, the 191-residue chain is Phospholipase A2-delta (191 aa).

A signal peptide spans 1–25; sequence MIRGGALTHVALGLTVFLLLAVVHS. Disulfide bonds link Cys29–Cys56, Cys33–Cys62, Cys38–Cys115, Cys49–Cys69, Cys68–Cys93, and Cys75–Cys86. 3 residues coordinate Ca(2+): Tyr48, Gly50, and Tyr53. Residue His72 is part of the active site. Asp73 contributes to the Ca(2+) binding site. The tract at residues 161 to 191 is disordered; sequence KADTKDGLGTNQGPQTKDGSKVSVPMNPSPS.

This sequence belongs to the phospholipase A2 family. The cofactor is Ca(2+). In terms of tissue distribution, specifically expressed in flowers but at a low level. Detected specifically in the pollen.

The protein localises to the secreted. Its subcellular location is the endoplasmic reticulum. It carries out the reaction a 1,2-diacyl-sn-glycero-3-phosphocholine + H2O = a 1-acyl-sn-glycero-3-phosphocholine + a fatty acid + H(+). Functionally, PA2 catalyzes the calcium-dependent hydrolysis of the 2-acyl groups in 3-sn-phosphoglycerides. Releases lysophospholipids (LPLs) and free fatty acids (FFAs) from membrane phospholipids in response to hormones and other external stimuli. Plays a role in pollen development and germination and tube growth. The sequence is that of Phospholipase A2-delta (PLA2-DELTA) from Arabidopsis thaliana (Mouse-ear cress).